We begin with the raw amino-acid sequence, 326 residues long: Biotin synthase (326 aa).

Residues 41-271 (YHVQLASLLS…EARVRLSAGR (231 aa)) form the Radical SAM core domain. [4Fe-4S] cluster is bound by residues Cys56, Cys60, and Cys63. 4 residues coordinate [2Fe-2S] cluster: Cys102, Cys134, Cys194, and Arg266.

Belongs to the radical SAM superfamily. Biotin synthase family. In terms of assembly, homodimer. The cofactor is [4Fe-4S] cluster. [2Fe-2S] cluster is required as a cofactor.

The catalysed reaction is (4R,5S)-dethiobiotin + (sulfur carrier)-SH + 2 reduced [2Fe-2S]-[ferredoxin] + 2 S-adenosyl-L-methionine = (sulfur carrier)-H + biotin + 2 5'-deoxyadenosine + 2 L-methionine + 2 oxidized [2Fe-2S]-[ferredoxin]. Its pathway is cofactor biosynthesis; biotin biosynthesis; biotin from 7,8-diaminononanoate: step 2/2. Functionally, catalyzes the conversion of dethiobiotin (DTB) to biotin by the insertion of a sulfur atom into dethiobiotin via a radical-based mechanism. This chain is Biotin synthase, found in Synechococcus sp. (strain RCC307).